Here is a 251-residue protein sequence, read N- to C-terminus: Hydroxyacylglutathione hydrolase (251 aa).

7 residues coordinate Zn(2+): His-53, His-55, Asp-57, His-58, His-110, Asp-127, and His-165.

This sequence belongs to the metallo-beta-lactamase superfamily. Glyoxalase II family. In terms of assembly, monomer. It depends on Zn(2+) as a cofactor.

The enzyme catalyses an S-(2-hydroxyacyl)glutathione + H2O = a 2-hydroxy carboxylate + glutathione + H(+). It functions in the pathway secondary metabolite metabolism; methylglyoxal degradation; (R)-lactate from methylglyoxal: step 2/2. Thiolesterase that catalyzes the hydrolysis of S-D-lactoyl-glutathione to form glutathione and D-lactic acid. The protein is Hydroxyacylglutathione hydrolase of Klebsiella pneumoniae subsp. pneumoniae (strain ATCC 700721 / MGH 78578).